The following is a 139-amino-acid chain: Natriuretic peptide Mf-NP (139 aa).

A signal peptide spans 1–25; sequence MVGLSRLTGGGLLLVLALLPLALDG. The propeptide occupies 26-75; that stretch reads KPLEEAPTAPSRIIPFSRPVRKESQAVLDPMVHPERPAGSGDDGDLSRLE. An intrachain disulfide couples cysteine 86 to cysteine 102. The propeptide occupies 117–139; it reads IIPFSRPVRKESRAALDRMQHPG.

It belongs to the natriuretic peptide family. In terms of tissue distribution, expressed by the venom gland.

The protein localises to the secreted. Its function is as follows. Natriuretic peptide that dose-dependently induces the rapid relaxation of rat aortic strips phenylephrine-precontracted. Acts by stimulating cGMP production in a dose-dependent manner (by probably activating NPR1 and/or NPR2). May also show potent hypotensive effects. This is Natriuretic peptide Mf-NP from Micrurus fulvius (Eastern coral snake).